Consider the following 383-residue polypeptide: Na(+)/H(+) antiporter NhaA (383 aa).

The next 11 helical transmembrane spans lie at Leu10 to Pro30, Leu56 to Ile76, Ile91 to Ser111, Gly121 to Gly141, Leu150 to Phe170, Ser174 to Asn194, Val206 to Ala226, Pro254 to Ser274, Ile289 to Phe308, Gly327 to Phe347, and Ala355 to Leu375.

This sequence belongs to the NhaA Na(+)/H(+) (TC 2.A.33) antiporter family.

It localises to the cell inner membrane. The enzyme catalyses Na(+)(in) + 2 H(+)(out) = Na(+)(out) + 2 H(+)(in). Functionally, na(+)/H(+) antiporter that extrudes sodium in exchange for external protons. This is Na(+)/H(+) antiporter NhaA from Francisella tularensis subsp. mediasiatica (strain FSC147).